Reading from the N-terminus, the 381-residue chain is Creatine kinase M-type (381 aa).

The Phosphagen kinase N-terminal domain maps to 11-98 (KLNYSAAEEF…FDPVIEDRHG (88 aa)). Residues 125 to 367 (YVLSSRVRTG…KLMVEMEKRL (243 aa)) form the Phosphagen kinase C-terminal domain. ATP contacts are provided by residues 128 to 132 (SSRVR), H191, R236, R292, 320 to 325 (RGTGGV), and D335.

The protein belongs to the ATP:guanido phosphotransferase family. In terms of assembly, dimer of identical or non-identical chains. With MM being the major form in skeletal muscle and myocardium, MB existing in myocardium, and BB existing in many tissues, especially brain.

The protein resides in the cytoplasm. It catalyses the reaction creatine + ATP = N-phosphocreatine + ADP + H(+). Reversibly catalyzes the transfer of phosphate between ATP and various phosphogens (e.g. creatine phosphate). Creatine kinase isoenzymes play a central role in energy transduction in tissues with large, fluctuating energy demands, such as skeletal muscle, heart, brain and spermatozoa. The chain is Creatine kinase M-type from Torpedo marmorata (Marbled electric ray).